A 579-amino-acid polypeptide reads, in one-letter code: Folliculin (579 aa).

Residues 32-82 are disordered; the sequence is GAGSGDSPGQVEQAEEEEGGIQMSSRVRAHSPAEGASTDSSSPGPKKSDMC. A phosphoserine mark is found at serine 62 and serine 73. The uDENN FLCN/SMCR8-type domain occupies 86–242; the sequence is RSLAVGHPGY…RNGNAARSLT (157 aa). Residues 287–310 are a coiled coil; that stretch reads EKLADLEEESESWDNSEAEEEEKA. The span at 294–308 shows a compositional bias: acidic residues; sequence EESESWDNSEAEEEE. The segment at 294 to 320 is disordered; that stretch reads EESESWDNSEAEEEEKAPATAEGAEGR. Serine 302, serine 406, serine 537, serine 542, and serine 571 each carry phosphoserine. One can recognise a cDENN FLCN/SMCR8-type domain in the interval 339–491; it reads QPPKLSVFKS…ILNKMEAALT (153 aa). Positions 493–558 constitute a dDENN FLCN/SMCR8-type domain; it reads QNLSVDVVDQ…LLKFWMTGLS (66 aa).

This sequence belongs to the folliculin family. As to quaternary structure, interacts (via C-terminus) with FNIP1 or FNIP2 (via C-terminus). Component of the lysosomal folliculin complex (LFC), composed of FLCN, FNIP1 (or FNIP2), RagA/RRAGA or RagB/RRAGB GDP-bound, RagC/RRAGC or RagD/RRAGD GTP-bound, and Ragulator. Interaction with FNIP1 or FNIP2 mediates indirect interaction with the PRKAA1, PRKAB1 and PRKAG1 subunits of 5'-AMP-activated protein kinase (AMPK). Interacts with HSP90AA1 in the presence of FNIP1. Interacts with HSP70, STUB1, CDC37, AHSA1, CCT2, STIP1, PTGES3 and PPP5C. Interacts with GABARAP; interaction takes place in the presence of FNIP1 and/or FNIP2. Interacts with RILP; the interaction is direct and promotes association between RILP and RAB34. Interacts with KIF3A and KIF3B. Interacts with lactate dehydrogenase LDHA, but not LDHB; the interaction is direct, may preferentially bind LDHA dimers rather than tetramers, and regulates LDHA activity, acting as an uncompetitive inhibitor. Phosphorylation by ULK1 modulates the interaction with GABARAP and is required to regulate autophagy. As to expression, expressed in kidney.

It is found in the lysosome membrane. Its subcellular location is the cytoplasm. The protein resides in the cytosol. The protein localises to the cell projection. It localises to the cilium. It is found in the cytoskeleton. Its subcellular location is the microtubule organizing center. The protein resides in the centrosome. The protein localises to the spindle. It localises to the nucleus. Its activity is regulated as follows. GTPase-activating activity is inhibited in the folliculin complex (LFC), which stabilizes the GDP-bound state of RagA/RRAGA (or RagB/RRAGB), because Arg-164 is located far from the RagC/RRAGC or RagD/RRAGD nucleotide pocket. Disassembly of the LFC complex upon amino acid restimulation liberates the GTPase-activating activity. Multi-functional protein, involved in both the cellular response to amino acid availability and in the regulation of glycolysis. GTPase-activating protein that plays a key role in the cellular response to amino acid availability through regulation of the non-canonical mTORC1 signaling cascade controlling the MiT/TFE factors TFEB and TFE3. Activates mTORC1 by acting as a GTPase-activating protein: specifically stimulates GTP hydrolysis by RagC/RRAGC or RagD/RRAGD, promoting the conversion to the GDP-bound state of RagC/RRAGC or RagD/RRAGD, and thereby activating the kinase activity of mTORC1. The GTPase-activating activity is inhibited during starvation and activated in presence of nutrients. Acts as a key component for non-canonical mTORC1-dependent control of the MiT/TFE factors TFEB and TFE3, while it is not involved in mTORC1-dependent phosphorylation of canonical RPS6KB1/S6K1 and EIF4EBP1/4E-BP1. In low-amino acid conditions, the lysosomal folliculin complex (LFC) is formed on the membrane of lysosomes, which inhibits the GTPase-activating activity of FLCN, inactivates mTORC1 and maximizes nuclear translocation of TFEB and TFE3. Upon amino acid restimulation, RagA/RRAGA (or RagB/RRAGB) nucleotide exchange promotes disassembly of the LFC complex and liberates the GTPase-activating activity of FLCN, leading to activation of mTORC1 and subsequent cytoplasmic retention of TFEB and TFE3. Indirectly acts as a positive regulator of Wnt signaling by promoting mTOR-dependent cytoplasmic retention of MiT/TFE factor TFE3. Required for the exit of hematopoietic stem cell from pluripotency by promoting mTOR-dependent cytoplasmic retention of TFE3, thereby increasing Wnt signaling. Involved in the control of embryonic stem cells differentiation; together with LAMTOR1 it is necessary to recruit and activate RagC/RRAGC and RagD/RRAGD at the lysosomes, and to induce exit of embryonic stem cells from pluripotency via non-canonical, mTOR-independent TFE3 inactivation. Acts as an inhibitor of browning of adipose tissue by regulating mTOR-dependent cytoplasmic retention of TFE3. In response to flow stress, regulates STK11/LKB1 accumulation and mTORC1 activation through primary cilia: may act by recruiting STK11/LKB1 to primary cilia for activation of AMPK resided at basal bodies, causing mTORC1 down-regulation. Together with FNIP1 and/or FNIP2, regulates autophagy: following phosphorylation by ULK1, interacts with GABARAP and promotes autophagy. Required for starvation-induced perinuclear clustering of lysosomes by promoting association of RILP with its effector RAB34. Regulates glycolysis by binding to lactate dehydrogenase LDHA, acting as an uncompetitive inhibitor. This is Folliculin from Rattus norvegicus (Rat).